The primary structure comprises 1755 residues: Transposon Ty1-LR2 Gag-Pol polyprotein (1755 aa).

Polar residues-rich tracts occupy residues 1 to 23, 48 to 60, and 127 to 152; these read MESQQLSQHSPISHGSACASVTS, TKANSQQTTTPAS, and QSQFPQYPSSVGTPLSTPSPESGNTF. 3 disordered regions span residues 1-93, 126-174, and 352-421; these read MESQ…MMTQ, PQSQ…PPPM, and GSRN…SKST. Positions 153 to 165 are enriched in low complexity; sequence TDSSSADSDMTST. Positions 299–401 are RNA-binding; sequence NNGIHINNKV…NSKSKTARAH (103 aa). The segment covering 402–418 has biased composition (low complexity); the sequence is NVSTSNNSPSTDNDSIS. Residue S416 is modified to Phosphoserine. The For protease activity; shared with dimeric partner role is filled by D461. Residues 583 to 640 are integrase-type zinc finger-like; it reads NVHTSESTRKYPYPFIHRMLAHANAPTIRYSLKNNTITYFNESDVDWSSAIDYQCPDC. An Integrase catalytic domain is found at 660-835; that stretch reads NSYEPFQYLH…AGLDISTLLP (176 aa). The Mg(2+) site is built by D671 and D736. Disordered regions lie at residues 956–1087, 1092–1111, and 1130–1187; these read SKAV…ETEK, RSPSIDASPPENNSSHNIVP, and DLPL…DNET. A compositionally biased stretch (low complexity) spans 960 to 969; sequence SPTDSTPPST. A compositionally biased stretch (polar residues) spans 1005 to 1015; it reads STPQISNIEST. Basic and acidic residues predominate over residues 1038–1053; that stretch reads ESSHASKSKDFRHSDS. Composition is skewed to polar residues over residues 1054–1082 and 1101–1111; these read YSENETNHTNVPISSTGGTNNKTVPQISD and PENNSSHNIVP. A Bipartite nuclear localization signal motif is present at residues 1178–1212; it reads KKRSLEDNETEIKVSRDTWNTKNMRSLEPPRSKKR. In terms of domain architecture, Reverse transcriptase Ty1/copia-type spans 1338–1476; that stretch reads NNYYITQLDI…DILGLEIKYQ (139 aa). D1346, D1427, D1428, D1610, E1652, and D1685 together coordinate Mg(2+). The RNase H Ty1/copia-type domain occupies 1610–1752; it reads DASYGNQPYY…IKTFKLLTNK (143 aa).

As to quaternary structure, the capsid protein forms a homotrimer, from which the VLPs are assembled. The protease is a homodimer, whose active site consists of two apposed aspartic acid residues. In terms of processing, initially, virus-like particles (VLPs) are composed of the structural unprocessed proteins Gag and Gag-Pol, and also contain the host initiator methionine tRNA (tRNA(i)-Met) which serves as a primer for minus-strand DNA synthesis, and a dimer of genomic Ty RNA. Processing of the polyproteins occurs within the particle and proceeds by an ordered pathway, called maturation. First, the protease (PR) is released by autocatalytic cleavage of the Gag-Pol polyprotein yielding capsid protein p45 and a Pol-p154 precursor protein. This cleavage is a prerequisite for subsequent processing of Pol-p154 at the remaining sites to release the mature structural and catalytic proteins. Maturation takes place prior to the RT reaction and is required to produce transposition-competent VLPs.

It localises to the cytoplasm. Its subcellular location is the nucleus. It carries out the reaction DNA(n) + a 2'-deoxyribonucleoside 5'-triphosphate = DNA(n+1) + diphosphate. It catalyses the reaction Endonucleolytic cleavage to 5'-phosphomonoester.. Capsid protein (CA) is the structural component of the virus-like particle (VLP), forming the shell that encapsulates the retrotransposons dimeric RNA genome. The particles are assembled from trimer-clustered units and there are holes in the capsid shells that allow for the diffusion of macromolecules. CA also has nucleocapsid-like chaperone activity, promoting primer tRNA(i)-Met annealing to the multipartite primer-binding site (PBS), dimerization of Ty1 RNA and initiation of reverse transcription. Functionally, the aspartyl protease (PR) mediates the proteolytic cleavages of the Gag and Gag-Pol polyproteins after assembly of the VLP. In terms of biological role, reverse transcriptase/ribonuclease H (RT) is a multifunctional enzyme that catalyzes the conversion of the retro-elements RNA genome into dsDNA within the VLP. The enzyme displays a DNA polymerase activity that can copy either DNA or RNA templates, and a ribonuclease H (RNase H) activity that cleaves the RNA strand of RNA-DNA heteroduplexes during plus-strand synthesis and hydrolyzes RNA primers. The conversion leads to a linear dsDNA copy of the retrotransposon that includes long terminal repeats (LTRs) at both ends. Its function is as follows. Integrase (IN) targets the VLP to the nucleus, where a subparticle preintegration complex (PIC) containing at least integrase and the newly synthesized dsDNA copy of the retrotransposon must transit the nuclear membrane. Once in the nucleus, integrase performs the integration of the dsDNA into the host genome. This chain is Transposon Ty1-LR2 Gag-Pol polyprotein (TY1B-LR2), found in Saccharomyces cerevisiae (strain ATCC 204508 / S288c) (Baker's yeast).